The following is a 219-amino-acid chain: MSKKSLSEDAQEVFRAIALIELGARMQVLESELTLSRERMIRLYREVKGVSPPKGMLPFSADWYTTWLANIHASLFYNTYRFLRDEARCSHLDALTKGYRLYLEHCRHNQTEPVLDLTRAWTLVRFFDANILQLTPCCRCSGKFIGHKHDLQHNVVCDACQPPSRAGKTKKAAAAKRDAQPQLVEVQHAANDVETIAVESLAAVETVAPGVFEEAVLAA.

Positions 137, 140, 157, and 160 each coordinate Zn(2+).

Belongs to the FlhC family. As to quaternary structure, heterohexamer composed of two FlhC and four FlhD subunits. Each FlhC binds a FlhD dimer, forming a heterotrimer, and a hexamer assembles by dimerization of two heterotrimers. Requires Zn(2+) as cofactor.

The protein localises to the cytoplasm. Functions in complex with FlhD as a master transcriptional regulator that regulates transcription of several flagellar and non-flagellar operons by binding to their promoter region. Activates expression of class 2 flagellar genes, including fliA, which is a flagellum-specific sigma factor that turns on the class 3 genes. Also regulates genes whose products function in a variety of physiological pathways. The chain is Flagellar transcriptional regulator FlhC from Paraburkholderia phymatum (strain DSM 17167 / CIP 108236 / LMG 21445 / STM815) (Burkholderia phymatum).